The following is a 94-amino-acid chain: Co-chaperonin GroES (94 aa).

The protein belongs to the GroES chaperonin family. Heptamer of 7 subunits arranged in a ring. Interacts with the chaperonin GroEL.

The protein resides in the cytoplasm. Its function is as follows. Together with the chaperonin GroEL, plays an essential role in assisting protein folding. The GroEL-GroES system forms a nano-cage that allows encapsulation of the non-native substrate proteins and provides a physical environment optimized to promote and accelerate protein folding. GroES binds to the apical surface of the GroEL ring, thereby capping the opening of the GroEL channel. The sequence is that of Co-chaperonin GroES from Heliobacterium modesticaldum (strain ATCC 51547 / Ice1).